The sequence spans 250 residues: Menaquinol:cytochrome c reductase cytochrome c subunit (250 aa).

3 consecutive transmembrane segments (helical) span residues 46 to 62 (WLVG…LTVA), 104 to 124 (VIGA…APFL), and 137 to 157 (VATG…WESV). The Cytochrome c domain occupies 178 to 250 (DTNAEGYKIA…LQKMANSSPA (73 aa)). Heme c-binding residues include C192, C195, and H196. Positions 229-250 (MPGGIFKGTDEELQKMANSSPA) are disordered.

Belongs to the cytochrome b family. In terms of assembly, the main subunits of the menaquinol:cytochrome c complex are a Rieske-type iron-sulfur protein (QcrA), a cytochrome b (QcrB) and a cytochrome c (QcrC). It depends on heme c as a cofactor.

It localises to the cell membrane. Component of the menaquinol:cytochrome c reductase complex. The protein is Menaquinol:cytochrome c reductase cytochrome c subunit (qcrC) of Geobacillus thermodenitrificans.